Reading from the N-terminus, the 457-residue chain is Cystathionine beta-lyase (457 aa).

The tract at residues 1 to 41 is disordered; that stretch reads MSTPNSDSPAAQAAKKVFSRLDLDGHNLPPSPAPSSPHNGR.

This sequence belongs to the trans-sulfuration enzymes family. Requires pyridoxal 5'-phosphate as cofactor.

The protein resides in the cytoplasm. The protein localises to the nucleus. The enzyme catalyses L,L-cystathionine + H2O = L-homocysteine + pyruvate + NH4(+). It catalyses the reaction an S-substituted L-cysteine + H2O = a thiol + pyruvate + NH4(+). Its pathway is amino-acid biosynthesis; L-methionine biosynthesis via de novo pathway; L-homocysteine from L-cystathionine: step 1/1. Involved in de novo synthesis of methionine. The sequence is that of Cystathionine beta-lyase (met-2) from Neurospora crassa (strain ATCC 24698 / 74-OR23-1A / CBS 708.71 / DSM 1257 / FGSC 987).